Reading from the N-terminus, the 230-residue chain is MLNSTIPARIAVKICGLTLPEQAIAIAQMGVSALGFITVPHSPRYVSAPTIAEICRQLPPAVLTVAVVANLDLEALANLVTTTGVQALQLHGSESPEFCQSVRQTFPNIVLIKALRVQSAATLAAIPAYASTVDRILLDAYHPQQLGGTGQPFDWTLLKALHIPCPWWLAGGITPENCRQAIAQTQPQGIDLASGVESRPGVKDLGRVAALLSNLGINANHSLYPEGSRF.

It belongs to the TrpF family.

The catalysed reaction is N-(5-phospho-beta-D-ribosyl)anthranilate = 1-(2-carboxyphenylamino)-1-deoxy-D-ribulose 5-phosphate. The protein operates within amino-acid biosynthesis; L-tryptophan biosynthesis; L-tryptophan from chorismate: step 3/5. This chain is N-(5'-phosphoribosyl)anthranilate isomerase, found in Thermosynechococcus vestitus (strain NIES-2133 / IAM M-273 / BP-1).